A 268-amino-acid chain; its full sequence is Probable chemotaxis protein methyltransferase (268 aa).

The region spanning 1–262 (MIYSDAGIFL…GITTYRYTTK (262 aa)) is the CheR-type methyltransferase domain. Residues N60, T62, R66, E104, D130, 188–189 (NL), and 205–206 (RN) contribute to the S-adenosyl-L-methionine site.

The catalysed reaction is L-glutamyl-[protein] + S-adenosyl-L-methionine = [protein]-L-glutamate 5-O-methyl ester + S-adenosyl-L-homocysteine. In terms of biological role, methylation of the membrane-bound methyl-accepting chemotaxis proteins (MCP) to form gamma-glutamyl methyl ester residues in MCP. The chain is Probable chemotaxis protein methyltransferase (cheRch1) from Rhizobium etli (strain ATCC 51251 / DSM 11541 / JCM 21823 / NBRC 15573 / CFN 42).